The primary structure comprises 318 residues: Ribose-phosphate pyrophosphokinase 2 (318 aa).

Position 96–101 (96–101 (RQDKKD)) interacts with ATP. Residues D128, H130, D139, and D143 each contribute to the Mg(2+) site. H130 serves as a coordination point for ATP. The segment at 212 to 227 (KDRVAILVDDMADTCG) is binding of phosphoribosylpyrophosphate.

This sequence belongs to the ribose-phosphate pyrophosphokinase family. As to quaternary structure, homodimer. The active form is probably a hexamer composed of 3 homodimers. Mg(2+) serves as cofactor.

It catalyses the reaction D-ribose 5-phosphate + ATP = 5-phospho-alpha-D-ribose 1-diphosphate + AMP + H(+). Its pathway is metabolic intermediate biosynthesis; 5-phospho-alpha-D-ribose 1-diphosphate biosynthesis; 5-phospho-alpha-D-ribose 1-diphosphate from D-ribose 5-phosphate (route I): step 1/1. With respect to regulation, activated by magnesium and inorganic phosphate. Competitively or non-competitively inhibited by ADP, 2,3-bisphosphoglyceride or GDP. Functionally, catalyzes the synthesis of phosphoribosylpyrophosphate (PRPP) that is essential for nucleotide synthesis. The sequence is that of Ribose-phosphate pyrophosphokinase 2 (PRPS2) from Homo sapiens (Human).